The following is a 57-amino-acid chain: MTLFQLLREHWVHILVPAGFVFGCYLDRKDDEKLTAFRNKSMLFQRELRPNEEVTWK.

Residues 10–26 form a helical membrane-spanning segment; the sequence is HWVHILVPAGFVFGCYL.

This sequence belongs to the complex I NDUFB1 subunit family. In terms of assembly, complex I is composed of 45 different subunits.

The protein localises to the mitochondrion inner membrane. Accessory subunit of the mitochondrial membrane respiratory chain NADH dehydrogenase (Complex I) that is believed not to be involved in catalysis. Complex I functions in the transfer of electrons from NADH to the respiratory chain. The immediate electron acceptor for the enzyme is believed to be ubiquinone. The sequence is that of NADH dehydrogenase [ubiquinone] 1 beta subcomplex subunit 1 (Ndufb1) from Mus musculus (Mouse).